The following is a 149-amino-acid chain: MRVVVQRVNKSSVKVDNEIVGSINKGFNVLVGIGKEDTIEDLKYMKDKVLNLRVFEDEEDKMNLSLKDVCGELLLISQFTLYGDCRKGRRPNFMNALGGDEAKKLFDEFVSMCREEGIKVETGVFGAHMVVDIENDGPVTLILDSKKNF.

The short motif at 137–138 (GP) is the Gly-cisPro motif, important for rejection of L-amino acids element.

The protein belongs to the DTD family. As to quaternary structure, homodimer.

It is found in the cytoplasm. The catalysed reaction is glycyl-tRNA(Ala) + H2O = tRNA(Ala) + glycine + H(+). The enzyme catalyses a D-aminoacyl-tRNA + H2O = a tRNA + a D-alpha-amino acid + H(+). Its function is as follows. An aminoacyl-tRNA editing enzyme that deacylates mischarged D-aminoacyl-tRNAs. Also deacylates mischarged glycyl-tRNA(Ala), protecting cells against glycine mischarging by AlaRS. Acts via tRNA-based rather than protein-based catalysis; rejects L-amino acids rather than detecting D-amino acids in the active site. By recycling D-aminoacyl-tRNA to D-amino acids and free tRNA molecules, this enzyme counteracts the toxicity associated with the formation of D-aminoacyl-tRNA entities in vivo and helps enforce protein L-homochirality. The chain is D-aminoacyl-tRNA deacylase from Clostridium perfringens (strain ATCC 13124 / DSM 756 / JCM 1290 / NCIMB 6125 / NCTC 8237 / Type A).